We begin with the raw amino-acid sequence, 207 residues long: Thiamine-phosphate synthase (207 aa).

Residues 35–39 and N67 each bind 4-amino-2-methyl-5-(diphosphooxymethyl)pyrimidine; that span reads QYRDK. 2 residues coordinate Mg(2+): D68 and D86. Residue T105 coordinates 4-amino-2-methyl-5-(diphosphooxymethyl)pyrimidine. 132 to 134 is a 2-[(2R,5Z)-2-carboxy-4-methylthiazol-5(2H)-ylidene]ethyl phosphate binding site; that stretch reads SVT. A 4-amino-2-methyl-5-(diphosphooxymethyl)pyrimidine-binding site is contributed by K135. G162 contributes to the 2-[(2R,5Z)-2-carboxy-4-methylthiazol-5(2H)-ylidene]ethyl phosphate binding site.

The protein belongs to the thiamine-phosphate synthase family. Mg(2+) serves as cofactor.

The catalysed reaction is 2-[(2R,5Z)-2-carboxy-4-methylthiazol-5(2H)-ylidene]ethyl phosphate + 4-amino-2-methyl-5-(diphosphooxymethyl)pyrimidine + 2 H(+) = thiamine phosphate + CO2 + diphosphate. It carries out the reaction 2-(2-carboxy-4-methylthiazol-5-yl)ethyl phosphate + 4-amino-2-methyl-5-(diphosphooxymethyl)pyrimidine + 2 H(+) = thiamine phosphate + CO2 + diphosphate. The enzyme catalyses 4-methyl-5-(2-phosphooxyethyl)-thiazole + 4-amino-2-methyl-5-(diphosphooxymethyl)pyrimidine + H(+) = thiamine phosphate + diphosphate. Its pathway is cofactor biosynthesis; thiamine diphosphate biosynthesis; thiamine phosphate from 4-amino-2-methyl-5-diphosphomethylpyrimidine and 4-methyl-5-(2-phosphoethyl)-thiazole: step 1/1. Its function is as follows. Condenses 4-methyl-5-(beta-hydroxyethyl)thiazole monophosphate (THZ-P) and 2-methyl-4-amino-5-hydroxymethyl pyrimidine pyrophosphate (HMP-PP) to form thiamine monophosphate (TMP). The chain is Thiamine-phosphate synthase from Pseudomonas putida (strain ATCC 47054 / DSM 6125 / CFBP 8728 / NCIMB 11950 / KT2440).